Here is a 259-residue protein sequence, read N- to C-terminus: Imidazole glycerol phosphate synthase subunit HisF (259 aa).

Active-site residues include aspartate 11 and aspartate 130.

It belongs to the HisA/HisF family. As to quaternary structure, heterodimer of HisH and HisF.

It is found in the cytoplasm. The enzyme catalyses 5-[(5-phospho-1-deoxy-D-ribulos-1-ylimino)methylamino]-1-(5-phospho-beta-D-ribosyl)imidazole-4-carboxamide + L-glutamine = D-erythro-1-(imidazol-4-yl)glycerol 3-phosphate + 5-amino-1-(5-phospho-beta-D-ribosyl)imidazole-4-carboxamide + L-glutamate + H(+). The protein operates within amino-acid biosynthesis; L-histidine biosynthesis; L-histidine from 5-phospho-alpha-D-ribose 1-diphosphate: step 5/9. Its function is as follows. IGPS catalyzes the conversion of PRFAR and glutamine to IGP, AICAR and glutamate. The HisF subunit catalyzes the cyclization activity that produces IGP and AICAR from PRFAR using the ammonia provided by the HisH subunit. The sequence is that of Imidazole glycerol phosphate synthase subunit HisF from Carboxydothermus hydrogenoformans (strain ATCC BAA-161 / DSM 6008 / Z-2901).